A 615-amino-acid chain; its full sequence is Chaperone protein HscA homolog (615 aa).

Belongs to the heat shock protein 70 family.

Its function is as follows. Chaperone involved in the maturation of iron-sulfur cluster-containing proteins. Has a low intrinsic ATPase activity which is markedly stimulated by HscB. In Aeromonas hydrophila subsp. hydrophila (strain ATCC 7966 / DSM 30187 / BCRC 13018 / CCUG 14551 / JCM 1027 / KCTC 2358 / NCIMB 9240 / NCTC 8049), this protein is Chaperone protein HscA homolog.